Here is a 252-residue protein sequence, read N- to C-terminus: uncharacterized protein (252 aa).

Residues Met-1–Ser-20 form the signal peptide.

It belongs to the ascovirus HvAV ORF17 family.

This is an uncharacterized protein from Spodoptera frugiperda ascovirus 1a (SfAV-1a).